The primary structure comprises 122 residues: Small ribosomal subunit protein uS13 (122 aa).

Residues 95 to 122 are disordered; that stretch reads GLPVRGQRTHTNARTRKGKAKPIAGKKK.

The protein belongs to the universal ribosomal protein uS13 family. Part of the 30S ribosomal subunit. Forms a loose heterodimer with protein S19. Forms two bridges to the 50S subunit in the 70S ribosome.

Functionally, located at the top of the head of the 30S subunit, it contacts several helices of the 16S rRNA. In the 70S ribosome it contacts the 23S rRNA (bridge B1a) and protein L5 of the 50S subunit (bridge B1b), connecting the 2 subunits; these bridges are implicated in subunit movement. Contacts the tRNAs in the A and P-sites. The sequence is that of Small ribosomal subunit protein uS13 from Zymomonas mobilis subsp. mobilis (strain ATCC 31821 / ZM4 / CP4).